The chain runs to 77 residues: Small ribosomal subunit protein bS18 (77 aa).

Belongs to the bacterial ribosomal protein bS18 family. In terms of assembly, part of the 30S ribosomal subunit. Forms a tight heterodimer with protein bS6.

Its function is as follows. Binds as a heterodimer with protein bS6 to the central domain of the 16S rRNA, where it helps stabilize the platform of the 30S subunit. This is Small ribosomal subunit protein bS18 from Bacillus cereus (strain ATCC 10987 / NRS 248).